The sequence spans 97 residues: uncharacterized protein (97 aa).

The Stress-response A/B barrel domain maps to 2 to 95 (IRHLVLFKLN…EFATWVIADY (94 aa)).

This is an uncharacterized protein from Streptomyces coelicolor (strain ATCC BAA-471 / A3(2) / M145).